The following is a 424-amino-acid chain: Serine--tRNA ligase (424 aa).

Residue 230-232 participates in L-serine binding; that stretch reads TAE. 261-263 serves as a coordination point for ATP; the sequence is RSE. Glutamate 284 contacts L-serine. An ATP-binding site is contributed by 348 to 351; it reads EISS. Residue serine 382 participates in L-serine binding.

The protein belongs to the class-II aminoacyl-tRNA synthetase family. Type-1 seryl-tRNA synthetase subfamily. Homodimer. The tRNA molecule binds across the dimer.

The protein resides in the cytoplasm. It catalyses the reaction tRNA(Ser) + L-serine + ATP = L-seryl-tRNA(Ser) + AMP + diphosphate + H(+). It carries out the reaction tRNA(Sec) + L-serine + ATP = L-seryl-tRNA(Sec) + AMP + diphosphate + H(+). It functions in the pathway aminoacyl-tRNA biosynthesis; selenocysteinyl-tRNA(Sec) biosynthesis; L-seryl-tRNA(Sec) from L-serine and tRNA(Sec): step 1/1. Functionally, catalyzes the attachment of serine to tRNA(Ser). Is also able to aminoacylate tRNA(Sec) with serine, to form the misacylated tRNA L-seryl-tRNA(Sec), which will be further converted into selenocysteinyl-tRNA(Sec). The sequence is that of Serine--tRNA ligase from Solibacter usitatus (strain Ellin6076).